A 445-amino-acid chain; its full sequence is C-terminal-binding protein 2 (445 aa).

An Asymmetric dimethylarginine modification is found at arginine 22. Residues serine 106, 186–191, aspartate 210, 243–249, 270–272, and aspartate 296 each bind NAD(+); these read IGFGRT, CNLNEHN, and AAR. The active site involves arginine 272. The active site involves glutamate 301. The Proton donor role is filled by histidine 321. NAD(+) is bound at residue 321-324; the sequence is HTAW. Positions 414–445 are disordered; the sequence is THNLPTVAHPSQAPSPNQPTKHGDNREHPNEQ. Serine 428 is modified (phosphoserine; by HIPK2). Basic and acidic residues predominate over residues 434–445; sequence KHGDNREHPNEQ.

Belongs to the D-isomer specific 2-hydroxyacid dehydrogenase family. Interacts with HIPK2, ZNF217 and PNN. Interacts with the transcription factors BKLF, delta EF1/AREB6/ZEB, EVI-1 and Friend of GATA (FOG) via the consensus motif P-X-[DNS]-L-[STVA]. Can form a complex with BKLF on a CACCC-box oligonucleotide. Can form homodimers or heterodimers of CTBP1 and CTBP2. Interacts with NRIP1 and WIZ. Interacts with PRDM16; represses white adipose tissue (WAT)-specific genes expression. Interacts with MCRIP1. Phosphorylation by HIPK2 on Ser-428 induces proteasomal degradation. As to expression, isoform 2 is specifically localized in synaptic ribbon (at protein level).

It localises to the nucleus. It is found in the synapse. Its function is as follows. Corepressor targeting diverse transcription regulators. Functions in brown adipose tissue (BAT) differentiation. Isoform 2 probably acts as a scaffold for specialized synapses. The polypeptide is C-terminal-binding protein 2 (Ctbp2) (Rattus norvegicus (Rat)).